We begin with the raw amino-acid sequence, 352 residues long: MVLSLQTLAKKVLAGQRPTKCHPHFLKCYGLWWHNGPMIFDQNQKKIWSPIFTDGVHINAALVKAVAENNYDLIKLFTEWGANIDYSLLSVNTERTRDLCRELGAKEQLKQEEVLYYFNIIKRNLTSSNIILCHEVFSHNPILETINRTKLRGIIYEQLEALMENTDILSELLTKYWYGIAIEFNLTKAIHYFYQRYVHLHQWRLMYALFYNNVCDLHELYAKEKIRMDMDEMLKWACRKNYNYLTIYYCCIVLGADINQAMFHSIQFYNIGNMFFCIDLGANAIEEGKTLALQKDKSFIASLLSINCYSMNDSLSLKETDPEVIKRMLKDYHSKNMSIAHKYYIKHGFNDI.

It belongs to the asfivirus MGF 360 family. As to quaternary structure, interacts with host STAT1; this interaction mediates STAT1 degradation through apoptosis. Interacts with host STAT2; this interaction mediates STAT2 degradation through the proteasome.

The protein localises to the host cytoplasm. Plays a role in virus cell tropism, and may be required for efficient virus replication in macrophages. In Ornithodoros (relapsing fever ticks), this protein is Protein MGF 360-9L.